Reading from the N-terminus, the 761-residue chain is Ribonucleoside-diphosphate reductase subunit alpha (761 aa).

An ATP-cone domain is found at 5–95 (LFVTKRDGRK…IFHLRKKAYG (91 aa)). ATP contacts are provided by residues K9, 15 to 21 (EKINLDK), T55, and K91. Residue T209 participates in GDP binding. C225 and C462 are oxidised to a cystine. DTTP-binding positions include 232-234 (DSL), R262, and R269. A GDP-binding site is contributed by N437. The Proton acceptor role is filled by N437. Catalysis depends on C439, which acts as the Cysteine radical intermediate. GDP is bound by residues E441 and 623–625 (ETS). E441 functions as the Proton acceptor in the catalytic mechanism.

It belongs to the ribonucleoside diphosphate reductase large chain family. In terms of assembly, tetramer of two alpha and two beta subunits.

The enzyme catalyses a 2'-deoxyribonucleoside 5'-diphosphate + [thioredoxin]-disulfide + H2O = a ribonucleoside 5'-diphosphate + [thioredoxin]-dithiol. Under complex allosteric control mediated by deoxynucleoside triphosphates and ATP binding to separate specificity and activation sites on the alpha subunit. The type of nucleotide bound at the specificity site determines substrate preference. It seems probable that ATP makes the enzyme reduce CDP and UDP, dGTP favors ADP reduction and dTTP favors GDP reduction. Stimulated by ATP and inhibited by dATP binding to the activity site. Its function is as follows. Provides the precursors necessary for DNA synthesis. Catalyzes the biosynthesis of deoxyribonucleotides from the corresponding ribonucleotides. This is Ribonucleoside-diphosphate reductase subunit alpha (nrdA) from Buchnera aphidicola subsp. Acyrthosiphon pisum (strain APS) (Acyrthosiphon pisum symbiotic bacterium).